We begin with the raw amino-acid sequence, 70 residues long: NAD(P)H-quinone oxidoreductase subunit O (70 aa).

The protein belongs to the complex I NdhO subunit family. NDH-1 can be composed of about 15 different subunits; different subcomplexes with different compositions have been identified which probably have different functions.

Its subcellular location is the cellular thylakoid membrane. The catalysed reaction is a plastoquinone + NADH + (n+1) H(+)(in) = a plastoquinol + NAD(+) + n H(+)(out). It catalyses the reaction a plastoquinone + NADPH + (n+1) H(+)(in) = a plastoquinol + NADP(+) + n H(+)(out). In terms of biological role, NDH-1 shuttles electrons from an unknown electron donor, via FMN and iron-sulfur (Fe-S) centers, to quinones in the respiratory and/or the photosynthetic chain. The immediate electron acceptor for the enzyme in this species is believed to be plastoquinone. Couples the redox reaction to proton translocation, and thus conserves the redox energy in a proton gradient. Cyanobacterial NDH-1 also plays a role in inorganic carbon-concentration. This Trichormus variabilis (strain ATCC 29413 / PCC 7937) (Anabaena variabilis) protein is NAD(P)H-quinone oxidoreductase subunit O.